Reading from the N-terminus, the 295-residue chain is Glutamate 5-kinase (295 aa).

Residue Lys9 coordinates ATP. 3 residues coordinate substrate: Ser49, Asp136, and Asn148. ATP-binding positions include Thr168–Asp169 and Thr210–Lys216.

This sequence belongs to the glutamate 5-kinase family.

The protein resides in the cytoplasm. The catalysed reaction is L-glutamate + ATP = L-glutamyl 5-phosphate + ADP. Its pathway is amino-acid biosynthesis; L-proline biosynthesis; L-glutamate 5-semialdehyde from L-glutamate: step 1/2. Its function is as follows. Catalyzes the transfer of a phosphate group to glutamate to form L-glutamate 5-phosphate. The sequence is that of Glutamate 5-kinase from Neisseria gonorrhoeae (strain NCCP11945).